The sequence spans 431 residues: MAPTLDSDSTVLSIRSDFRQGRVQRQLKSELYRNDNRMSVENDFRAPYIQLPYPQARLNPKTTECMNITFDWLSSMGIDKQVDPSVWQAFVASRLSDIVGYSCNEDIEPEDFLWLCKFTTWLFIFDSMMDDGHWAENICMSSHAILEMNLILMWNDPENERLLECSKSILDLVMAIDASGSRLQLDKFHADMVDARKKSKSLLDVKMGVFTSAFRDCWMEYVEDVPAEYTTRIAQTFQRYISSCLWEEKNRKEQAECMNVADYVTLRRFSGCVEPYFVYVDRIIEHKRRKSPISHIPNTLFYGEHMQNMLAAATDVICWHNDIFSFPKETIREGDKHNLVYTVFQQYNCHSCTQAGELIVELLHDRIAEMEFAYEKLRSAAAPEFHPAIDVYIKNCRDWISGSHEFHMNSSRYNVRSFSGPPENVKHINSV.

Residues D126 and D130 each coordinate Mg(2+). Residue R267 coordinates (2E,6E)-farnesyl diphosphate. Mg(2+)-binding residues include N321 and S325. K328 lines the (2E,6E)-farnesyl diphosphate pocket. Position 329 (E329) interacts with Mg(2+). 412 to 413 provides a ligand contact to (2E,6E)-farnesyl diphosphate; sequence RY.

Belongs to the terpene synthase family. Requires Mg(2+) as cofactor.

It carries out the reaction (2E,6E)-farnesyl diphosphate = (-)-alpha-gurjunene + diphosphate. The catalysed reaction is (2E,6E)-farnesyl diphosphate + H2O = 5-hydroxy-alpha-gurjunene + diphosphate. The protein operates within secondary metabolite biosynthesis; terpenoid biosynthesis. Its function is as follows. Catalyzes the conversion of (2E,6E)-farnesyl diphosphate (FPP) into the sesquiterpene alcohols (-)-alpha-gurjunene and 5-hydroxy-alpha-gurjunene. Other unidentified sesquiterpene alcohols found to be catalyzed by MTPSL4 may arise from carbocation reaction intermediates along the catalytic cascade to gurjunene being quenched by a water molecule, yielding formation of the alcohols. The protein is Alpha-gurjunene synthase of Marchantia polymorpha (Common liverwort).